A 217-amino-acid chain; its full sequence is C-type lectin domain family 2 member I (217 aa).

Topologically, residues 1–53 (MPDCLETGEKLFVHNMNAQCVQKPEEGNGPLGTGGKIVQGKCFRIISTVSPVK) are cytoplasmic. The helical; Signal-anchor for type II membrane protein transmembrane segment at 54 to 74 (LYCCYGVIMVLTVAVIALSVA) threads the bilayer. Over 75-217 (LSTKKTEQII…YNLHCQTPPV (143 aa)) the chain is Extracellular. Cysteine 92 and cysteine 103 are disulfide-bonded. Positions 99-203 (VGNKCFYFSG…SYINRMWICS (105 aa)) constitute a C-type lectin domain. A glycan (N-linked (GlcNAc...) asparagine) is linked at asparagine 112. A disulfide bridge connects residues cysteine 120 and cysteine 202.

Detected in osteoblasts, growth plate chondrocytes and skeletal muscle overlying the bone (at protein level). Detected in spleen, B-cells, dendritic cells, thymus, and in IL2-activated natural killer cells.

The protein localises to the cell membrane. Its function is as follows. Inhibits osteoclast formation. Receptor for KLRB1F. Enhances T-cell activation. Plays a role in splenocyte activation, T-cell responses and IL-2 production. The protein is C-type lectin domain family 2 member I (Clec2i) of Mus musculus (Mouse).